We begin with the raw amino-acid sequence, 32 residues long: Photosystem II reaction center protein T (32 aa).

Met1 carries the N-formylmethionine modification. At 1–2 the chain is on the lumenal side; that stretch reads ME. A helical transmembrane segment spans residues 3–23; sequence TITYVFIFACIIALFFFAIFF. At 24 to 32 the chain is on the cytoplasmic side; the sequence is REPPRITKK.

It belongs to the PsbT family. In terms of assembly, PSII is composed of 1 copy each of membrane proteins PsbA, PsbB, PsbC, PsbD, PsbE, PsbF, PsbH, PsbI, PsbJ, PsbK, PsbL, PsbM, PsbT, PsbX, PsbY, PsbZ, Psb30/Ycf12, PsbO, CyanoQ (PsbQ), PsbU, PsbV and a large number of cofactors. It forms dimeric complexes. Part of a photosystem II (PSII) assembly intermediate complex PSII-I; crystallized from a strain deleted of psbJ, it forms monomeric PSII before addition of the oxygen evolving complex. PSII-I includes 3 assembly factors not found in mature PSII (Psb27, Psb28 and Psb34). The cofactor is PSII binds multiple chlorophylls, carotenoids and specific lipids..

It localises to the cellular thylakoid membrane. Its function is as follows. Found at the monomer-monomer interface of the photosystem II (PS II) dimer, plays a role in assembly and dimerization of PSII. PSII is a light-driven water plastoquinone oxidoreductase, using light energy to abstract electrons from H(2)O, generating a proton gradient subsequently used for ATP formation. This Thermosynechococcus vestitus (strain NIES-2133 / IAM M-273 / BP-1) protein is Photosystem II reaction center protein T.